The chain runs to 593 residues: Multidrug resistance-like ATP-binding protein MdlB (593 aa).

The Cytoplasmic portion of the chain corresponds to 1–25 (MRSFSQLWPTLKRLLAYGSPWRKPL). Residues 25–310 (LGIAVLMMWV…LTTQQAMLQQ (286 aa)) enclose the ABC transmembrane type-1 domain. The helical transmembrane segment at 26-46 (GIAVLMMWVAAAAEVSGPLLI) threads the bilayer. Residues 47–62 (SYFIDNMVAKNNLPLK) lie on the Periplasmic side of the membrane. A helical transmembrane segment spans residues 63–83 (VVAGLAAAYVGLQLFAAGLHY). Topologically, residues 84 to 140 (AQSLLFNRAAVGVVQQLRTDVMDAALRQPLSEFDTQPVGQVISRVTNDTEVIRDLYV) are cytoplasmic. The helical transmembrane segment at 141-161 (TVVATVLRSAALVGAMLVAMF) threads the bilayer. Residues 162-164 (SLD) lie on the Periplasmic side of the membrane. The chain crosses the membrane as a helical span at residues 165 to 185 (WRMALVAIMIFPVVLVVMVIY). Over 186–254 (QRYSTPIVRR…LRLDGFLLRP (69 aa)) the chain is Cytoplasmic. The chain crosses the membrane as a helical span at residues 255-275 (LLSLFSSLILCGLLMLFGFSA). The Periplasmic segment spans residues 276–278 (SGT). Residues 279 to 299 (IEVGVLYAFISYLGRLNEPLI) form a helical membrane-spanning segment. Topologically, residues 300–593 (ELTTQQAMLQ…SVREEESLSA (294 aa)) are cytoplasmic. The ABC transporter domain occupies 341–574 (IEVDNVSFAY…QGRYWQMYQL (234 aa)). 374-381 (GHTGSGKS) contributes to the ATP binding site.

It belongs to the ABC transporter superfamily. Drug exporter-2 (TC 3.A.1.117) family.

The protein localises to the cell inner membrane. The enzyme catalyses ATP + H2O + xenobioticSide 1 = ADP + phosphate + xenobioticSide 2.. The polypeptide is Multidrug resistance-like ATP-binding protein MdlB (mdlB) (Escherichia coli O6:H1 (strain CFT073 / ATCC 700928 / UPEC)).